The primary structure comprises 138 residues: Large ribosomal subunit protein uL16 (138 aa).

Belongs to the universal ribosomal protein uL16 family. In terms of assembly, part of the 50S ribosomal subunit.

In terms of biological role, binds 23S rRNA and is also seen to make contacts with the A and possibly P site tRNAs. The sequence is that of Large ribosomal subunit protein uL16 from Anaeromyxobacter sp. (strain Fw109-5).